A 175-amino-acid polypeptide reads, in one-letter code: Disulfide bond formation protein B (175 aa).

The Cytoplasmic portion of the chain corresponds to 1 to 13 (MSKLVTFSQQRSA). A helical transmembrane segment spans residues 14–30 (WLILMFSALGLEASALY). Residues 31 to 48 (FQYVMLLDPCVMCIYIRV) are Periplasmic-facing. Cysteine 40 and cysteine 43 are joined by a disulfide. Residues 49–64 (AVLGLILAGLVGSIAP) traverse the membrane as a helical segment. Over 65 to 71 (RFWIVRF) the chain is Cytoplasmic. A helical transmembrane segment spans residues 72–89 (LGMSLWGVSSAWGAKLSF). Over 90-144 (ELYQMQANPSPFSTCSFYPEFPTWMPLDAWMPSIFMPTGMCSDIPWTMMSLSMTQ) the chain is Periplasmic. Cysteine 104 and cysteine 130 are joined by a disulfide. The chain crosses the membrane as a helical span at residues 145–163 (WTLIAFVGYSIAFLLFIYP). Over 164-175 (GLLYKKPTNPYS) the chain is Cytoplasmic.

This sequence belongs to the DsbB family.

The protein localises to the cell inner membrane. Required for disulfide bond formation in some periplasmic proteins. Acts by oxidizing the DsbA protein. The protein is Disulfide bond formation protein B of Shewanella denitrificans (strain OS217 / ATCC BAA-1090 / DSM 15013).